We begin with the raw amino-acid sequence, 188 residues long: ATP synthase subunit b (188 aa).

A helical transmembrane segment spans residues 24–44; it reads LPASYDIVWSLVVFIIVLILF.

It belongs to the ATPase B chain family. As to quaternary structure, F-type ATPases have 2 components, F(1) - the catalytic core - and F(0) - the membrane proton channel. F(1) has five subunits: alpha(3), beta(3), gamma(1), delta(1), epsilon(1). F(0) has three main subunits: a(1), b(2) and c(10-14). The alpha and beta chains form an alternating ring which encloses part of the gamma chain. F(1) is attached to F(0) by a central stalk formed by the gamma and epsilon chains, while a peripheral stalk is formed by the delta and b chains.

The protein localises to the cell membrane. Its function is as follows. F(1)F(0) ATP synthase produces ATP from ADP in the presence of a proton or sodium gradient. F-type ATPases consist of two structural domains, F(1) containing the extramembraneous catalytic core and F(0) containing the membrane proton channel, linked together by a central stalk and a peripheral stalk. During catalysis, ATP synthesis in the catalytic domain of F(1) is coupled via a rotary mechanism of the central stalk subunits to proton translocation. Component of the F(0) channel, it forms part of the peripheral stalk, linking F(1) to F(0). This Corynebacterium diphtheriae (strain ATCC 700971 / NCTC 13129 / Biotype gravis) protein is ATP synthase subunit b.